We begin with the raw amino-acid sequence, 186 residues long: Ribosome maturation factor RimP (186 aa).

The protein belongs to the RimP family.

Its subcellular location is the cytoplasm. In terms of biological role, required for maturation of 30S ribosomal subunits. This chain is Ribosome maturation factor RimP, found in Novosphingobium aromaticivorans (strain ATCC 700278 / DSM 12444 / CCUG 56034 / CIP 105152 / NBRC 16084 / F199).